The chain runs to 319 residues: Oligopeptide transport system permease protein OppB (319 aa).

Helical transmembrane passes span 9-29 (ILLM…FAKL), 99-119 (FWMS…MSIV), 137-157 (SITF…IFGY), 183-203 (IYHM…GIFT), 248-268 (FGFV…IFGY), and 289-309 (ALIL…DIIM). The ABC transmembrane type-1 domain maps to 95 to 305 (AINTFWMSLL…FLGLLGALLS (211 aa)).

This sequence belongs to the binding-protein-dependent transport system permease family. OppBC subfamily. The complex is composed of two ATP-binding proteins (OppD and OppF), two transmembrane proteins (OppB and OppC) and a solute-binding protein (OppA).

It is found in the cell membrane. In terms of biological role, part of the ABC transporter complex OppABCDF involved in the uptake of oligopeptides. Probably responsible for the translocation of the substrate across the membrane. Essential for uptake of peptides larger than three amino acids and for growth in milk. The protein is Oligopeptide transport system permease protein OppB (oppB) of Lactococcus lactis subsp. lactis (strain IL1403) (Streptococcus lactis).